Consider the following 200-residue polypeptide: NADH-quinone oxidoreductase subunit C (200 aa).

The protein belongs to the complex I 30 kDa subunit family. NDH-1 is composed of 14 different subunits. Subunits NuoB, C, D, E, F, and G constitute the peripheral sector of the complex.

Its subcellular location is the cell inner membrane. It catalyses the reaction a quinone + NADH + 5 H(+)(in) = a quinol + NAD(+) + 4 H(+)(out). NDH-1 shuttles electrons from NADH, via FMN and iron-sulfur (Fe-S) centers, to quinones in the respiratory chain. The immediate electron acceptor for the enzyme in this species is believed to be ubiquinone. Couples the redox reaction to proton translocation (for every two electrons transferred, four hydrogen ions are translocated across the cytoplasmic membrane), and thus conserves the redox energy in a proton gradient. The chain is NADH-quinone oxidoreductase subunit C from Burkholderia ambifaria (strain ATCC BAA-244 / DSM 16087 / CCUG 44356 / LMG 19182 / AMMD) (Burkholderia cepacia (strain AMMD)).